Reading from the N-terminus, the 239-residue chain is 6-phosphogluconolactonase (239 aa).

Belongs to the glucosamine/galactosamine-6-phosphate isomerase family. 6-phosphogluconolactonase subfamily.

The enzyme catalyses 6-phospho-D-glucono-1,5-lactone + H2O = 6-phospho-D-gluconate + H(+). Its pathway is carbohydrate degradation; pentose phosphate pathway; D-ribulose 5-phosphate from D-glucose 6-phosphate (oxidative stage): step 2/3. In terms of biological role, hydrolysis of 6-phosphogluconolactone to 6-phosphogluconate. The polypeptide is 6-phosphogluconolactonase (pgl) (Xylella fastidiosa (strain Temecula1 / ATCC 700964)).